The primary structure comprises 267 residues: Trehalose 2-sulfotransferase (267 aa).

Alpha,alpha-trehalose-binding positions include Q14, E33–Q39, P48, and W53. E36 serves as the catalytic Proton acceptor.

This sequence belongs to the Stf0 sulfotransferase family. As to quaternary structure, homodimer.

The catalysed reaction is alpha,alpha-trehalose + 3'-phosphoadenylyl sulfate = 2-O-sulfo-alpha,alpha-trehalose + adenosine 3',5'-bisphosphate + H(+). The protein operates within glycolipid metabolism. Its function is as follows. Catalyzes the sulfuryl group transfer from 3'-phosphoadenosine-5'-phosphosulfate (PAPS) to trehalose, leading to trehalose-2-sulfate (T2S). The sulfation of trehalose is the first step in the biosynthesis of sulfolipid-1 (SL-1), a major cell wall glycolipid in pathogenic mycobacteria. Cannot use free glucose and unnatural stereoisomers of trehalose (alpha,beta (neo-trehalose) and beta,beta (iso-trehalose)) as substrates. This is Trehalose 2-sulfotransferase from Mycolicibacterium smegmatis (strain ATCC 700084 / mc(2)155) (Mycobacterium smegmatis).